The sequence spans 165 residues: Endoribonuclease YbeY (165 aa).

3 residues coordinate Zn(2+): His-130, His-134, and His-140.

Belongs to the endoribonuclease YbeY family. It depends on Zn(2+) as a cofactor.

The protein resides in the cytoplasm. In terms of biological role, single strand-specific metallo-endoribonuclease involved in late-stage 70S ribosome quality control and in maturation of the 3' terminus of the 16S rRNA. This Streptococcus pyogenes serotype M1 protein is Endoribonuclease YbeY.